Reading from the N-terminus, the 215-residue chain is Protein-methionine-sulfoxide reductase heme-binding subunit MsrQ (215 aa).

A run of 6 helical transmembrane segments spans residues 17–37 (AAIW…FYLA), 50–70 (FEHL…LVTP), 85–105 (ALGL…LVLD), 121–141 (PYIM…LTSN), 152–172 (WNTL…HFVL), and 177–197 (ITLE…YRLV).

Belongs to the MsrQ family. Heterodimer of a catalytic subunit (MsrP) and a heme-binding subunit (MsrQ). FMN is required as a cofactor. Requires heme b as cofactor.

It is found in the cell inner membrane. Part of the MsrPQ system that repairs oxidized periplasmic proteins containing methionine sulfoxide residues (Met-O), using respiratory chain electrons. Thus protects these proteins from oxidative-stress damage caused by reactive species of oxygen and chlorine generated by the host defense mechanisms. MsrPQ is essential for the maintenance of envelope integrity under bleach stress, rescuing a wide series of structurally unrelated periplasmic proteins from methionine oxidation. MsrQ provides electrons for reduction to the reductase catalytic subunit MsrP, using the quinone pool of the respiratory chain. This Agrobacterium fabrum (strain C58 / ATCC 33970) (Agrobacterium tumefaciens (strain C58)) protein is Protein-methionine-sulfoxide reductase heme-binding subunit MsrQ.